Consider the following 361-residue polypeptide: Mitogen-activated protein kinase 14B (361 aa).

The Protein kinase domain occupies Tyr-25–Phe-309. Residues Val-31–Val-39 and Lys-54 contribute to the ATP site. The active-site Proton acceptor is Asp-151. Residue Thr-181 is modified to Phosphothreonine; by MAP2K6. The short motif at Thr-181–Tyr-183 is the TXY element. Tyr-183 carries the phosphotyrosine; by MAP2K6 modification.

Belongs to the protein kinase superfamily. CMGC Ser/Thr protein kinase family. MAP kinase subfamily. Mg(2+) serves as cofactor. In terms of processing, dually phosphorylated on Thr-181 and Tyr-183, which activates the enzyme. Predominantly expressed in the ovary. Lower levels present in brain, gill, heart, spleen, kidney, muscle and gut.

Its subcellular location is the cytoplasm. The protein localises to the nucleus. The enzyme catalyses L-seryl-[protein] + ATP = O-phospho-L-seryl-[protein] + ADP + H(+). It catalyses the reaction L-threonyl-[protein] + ATP = O-phospho-L-threonyl-[protein] + ADP + H(+). Its activity is regulated as follows. Activated by threonine and tyrosine phosphorylation by the dual specificity kinase, MKK6. Serine/threonine kinase which acts as an essential component of the MAP kinase signal transduction pathway. Mapk14b is one of the four p38 MAPKs which play an important role in the cascades of cellular responses evoked by extracellular stimuli such as pro-inflammatory cytokines or physical stress leading to direct activation of transcription factors. Accordingly, p38 MAPKs phosphorylate a broad range of proteins and it has been estimated that they may have approximately 200 to 300 substrates each. Some of the targets are downstream kinases which are activated through phosphorylation and further phosphorylate additional targets. The protein is Mitogen-activated protein kinase 14B (mapk14b) of Cyprinus carpio (Common carp).